The sequence spans 592 residues: V-type ATP synthase alpha chain (592 aa).

232-239 (GPFGAGKT) is a binding site for ATP.

It belongs to the ATPase alpha/beta chains family.

The enzyme catalyses ATP + H2O + 4 H(+)(in) = ADP + phosphate + 5 H(+)(out). In terms of biological role, produces ATP from ADP in the presence of a proton gradient across the membrane. The V-type alpha chain is a catalytic subunit. This is V-type ATP synthase alpha chain from Clostridium botulinum (strain Alaska E43 / Type E3).